The primary structure comprises 984 residues: Ephrin type-B receptor 1 (984 aa).

The Eph LBD domain occupies 1–182 (ETLMDTRTAT…FFKKCPSVVQ (182 aa)). Over 1–541 (ETLMDTRTAT…KSELREQLPL (541 aa)) the chain is Extracellular. 2 Fibronectin type-III domains span residues 303–413 (VPSG…TNQA) and 414–528 (APST…TLTD). N315, N407, and N480 each carry an N-linked (GlcNAc...) asparagine glycan. The helical transmembrane segment at 542–562 (IAGSAAAGVVFIVSLVAISIV) threads the bilayer. At 563–984 (CSRKRAYSKE…QMSQSPTSMA (422 aa)) the chain is on the cytoplasmic side. In terms of domain architecture, Protein kinase spans 619–882 (VKIEEVIGAG…EIVNTLDKMI (264 aa)). ATP-binding positions include 625 to 633 (IGAGEFGEV) and K651. D744 acts as the Proton acceptor in catalysis. The SAM domain occupies 911–975 (TAFTSVEDWL…LNSIQSMRVQ (65 aa)). The short motif at 982 to 984 (SMA) is the PDZ-binding element.

This sequence belongs to the protein kinase superfamily. Tyr protein kinase family. Ephrin receptor subfamily. Heterotetramer upon binding of the ligand. The heterotetramer is composed of an ephrin dimer and a receptor dimer. Oligomerization is probably required to induce biological responses. Phosphorylated. Autophosphorylation is stimulated by ligands. In terms of tissue distribution, expressed at high levels in the 10-day embryo, and in adult brain, lung, heart and skeletal muscle. Low levels of expression detected in all other adult tissues tested.

The protein resides in the cell membrane. It is found in the early endosome membrane. Its subcellular location is the cell projection. The protein localises to the dendrite. The enzyme catalyses L-tyrosyl-[protein] + ATP = O-phospho-L-tyrosyl-[protein] + ADP + H(+). Its function is as follows. Receptor tyrosine kinase which binds promiscuously transmembrane ephrin-B family ligands residing on adjacent cells, leading to contact-dependent bidirectional signaling into neighboring cells. The signaling pathway downstream of the receptor is referred to as forward signaling while the signaling pathway downstream of the ephrin ligand is referred to as reverse signaling. May play a role in axon guidance during nervous system development. May also play an important redundant role with other ephrin-B receptors in development and maturation of dendritic spines and synapse formation. More generally, may play a role in targeted cell migration and adhesion. Upon activation by ephrin-B ligands activates the MAPK/ERK and the JNK signaling cascades to regulate cell migration and adhesion respectively. This chain is Ephrin type-B receptor 1 (EPHB1), found in Gallus gallus (Chicken).